The following is a 262-amino-acid chain: Phosphatidylglycerol--prolipoprotein diacylglyceryl transferase (262 aa).

4 helical membrane passes run 9–29, 41–61, 80–100, and 109–129; these read LGPL…ILAV, IIPD…ILGA, IFAI…GALV, and LINT…AQSL. A 1,2-diacyl-sn-glycero-3-phospho-(1'-sn-glycerol) is bound at residue arginine 131. 3 helical membrane-spanning segments follow: residues 167–187, 197–217, and 227–247; these read QPTF…ILIF, GHIT…IEGM, and LRVS…IVIY.

Belongs to the Lgt family.

The protein localises to the cell membrane. The catalysed reaction is L-cysteinyl-[prolipoprotein] + a 1,2-diacyl-sn-glycero-3-phospho-(1'-sn-glycerol) = an S-1,2-diacyl-sn-glyceryl-L-cysteinyl-[prolipoprotein] + sn-glycerol 1-phosphate + H(+). It participates in protein modification; lipoprotein biosynthesis (diacylglyceryl transfer). Its function is as follows. Catalyzes the transfer of the diacylglyceryl group from phosphatidylglycerol to the sulfhydryl group of the N-terminal cysteine of a prolipoprotein, the first step in the formation of mature lipoproteins. This is Phosphatidylglycerol--prolipoprotein diacylglyceryl transferase from Streptococcus pneumoniae (strain JJA).